Reading from the N-terminus, the 436-residue chain is Histidinol dehydrogenase (436 aa).

Residues Tyr-135, Gln-196, and Asn-219 each contribute to the NAD(+) site. Substrate is bound by residues Ser-242, Gln-264, and His-267. Residues Gln-264 and His-267 each contribute to the Zn(2+) site. Catalysis depends on proton acceptor residues Glu-332 and His-333. The substrate site is built by His-333, Asp-366, Glu-420, and His-425. A Zn(2+)-binding site is contributed by Asp-366. His-425 is a binding site for Zn(2+).

This sequence belongs to the histidinol dehydrogenase family. Requires Zn(2+) as cofactor.

The catalysed reaction is L-histidinol + 2 NAD(+) + H2O = L-histidine + 2 NADH + 3 H(+). It functions in the pathway amino-acid biosynthesis; L-histidine biosynthesis; L-histidine from 5-phospho-alpha-D-ribose 1-diphosphate: step 9/9. Its function is as follows. Catalyzes the sequential NAD-dependent oxidations of L-histidinol to L-histidinaldehyde and then to L-histidine. The sequence is that of Histidinol dehydrogenase from Methylococcus capsulatus (strain ATCC 33009 / NCIMB 11132 / Bath).